A 436-amino-acid chain; its full sequence is Anaerobic glycerol-3-phosphate dehydrogenase subunit B (436 aa).

Belongs to the anaerobic G-3-P dehydrogenase subunit B family. Composed of a catalytic GlpA/B dimer and of membrane bound GlpC. Requires FMN as cofactor.

The enzyme catalyses a quinone + sn-glycerol 3-phosphate = dihydroxyacetone phosphate + a quinol. It participates in polyol metabolism; glycerol degradation via glycerol kinase pathway; glycerone phosphate from sn-glycerol 3-phosphate (anaerobic route): step 1/1. Its function is as follows. Conversion of glycerol 3-phosphate to dihydroxyacetone. Uses fumarate or nitrate as electron acceptor. This is Anaerobic glycerol-3-phosphate dehydrogenase subunit B from Vibrio cholerae serotype O1 (strain M66-2).